Consider the following 190-residue polypeptide: Peptidyl-tRNA hydrolase (190 aa).

Residue Y14 participates in tRNA binding. The active-site Proton acceptor is the H19. TRNA is bound by residues Y63, N65, and N112.

Belongs to the PTH family. As to quaternary structure, monomer.

It localises to the cytoplasm. The enzyme catalyses an N-acyl-L-alpha-aminoacyl-tRNA + H2O = an N-acyl-L-amino acid + a tRNA + H(+). Its function is as follows. Hydrolyzes ribosome-free peptidyl-tRNAs (with 1 or more amino acids incorporated), which drop off the ribosome during protein synthesis, or as a result of ribosome stalling. Catalyzes the release of premature peptidyl moieties from peptidyl-tRNA molecules trapped in stalled 50S ribosomal subunits, and thus maintains levels of free tRNAs and 50S ribosomes. This chain is Peptidyl-tRNA hydrolase, found in Kosmotoga olearia (strain ATCC BAA-1733 / DSM 21960 / TBF 19.5.1).